We begin with the raw amino-acid sequence, 265 residues long: Palmitoyltransferase ZDHHC21 (265 aa).

The Cytoplasmic segment spans residues 1-16 (MGLRIHFVVDPHGWCC). The helical transmembrane segment at 17–37 (MGLIVFVWLYNIVLIPKIVLF) threads the bilayer. The Extracellular portion of the chain corresponds to 38–44 (PHYEEGH). The chain crosses the membrane as a helical span at residues 45-65 (IPGILIIIFYGISIFCLVALV). Residues 66 to 133 (RASITDPGRL…NNCVGEDNHW (68 aa)) are Cytoplasmic-facing. The 51-residue stretch at 90 to 140 (ELCNKCNLMRPKRSHHCSRCGHCVRRMDHHCPWINNCVGEDNHWLFLQLCF) folds into the DHHC domain. Catalysis depends on Cys-120, which acts as the S-palmitoyl cysteine intermediate. The chain crosses the membrane as a helical span at residues 134-154 (LFLQLCFYTELLTCYALMFSF). The Extracellular portion of the chain corresponds to 155 to 185 (CHYYYFLPLKKRNLDLFVFRHELAIMRLAAF). Residues 186 to 206 (MGITMLVGITGLFYTQLIGII) form a helical membrane-spanning segment. At 207–265 (TDTTSIEKMSNCCEDISRPRKPWQQTFSEVFGTRWKILWFIPFRQRQPLRVPYHFANHV) the chain is on the cytoplasmic side.

The protein belongs to the DHHC palmitoyltransferase family. In terms of tissue distribution, widely expressed.

Its subcellular location is the golgi apparatus membrane. The protein resides in the golgi apparatus. The protein localises to the cis-Golgi network membrane. It localises to the cell membrane. It carries out the reaction L-cysteinyl-[protein] + hexadecanoyl-CoA = S-hexadecanoyl-L-cysteinyl-[protein] + CoA. Its function is as follows. Palmitoyltransferase that catalyzes the addition of palmitate onto various protein substrates. Palmitoylates sex steroid hormone receptors, including ESR1, PGR and AR, thereby regulating their targeting to the plasma membrane. This affects rapid intracellular signaling by sex hormones via ERK and AKT kinases and the generation of cAMP, but does not affect that mediated by their nuclear receptor. Palmitoylates FYN, regulates its localization in hair follicles and plays a key role in epidermal homeostasis and hair follicle differentiation. Through the palmitoylation of PLCB1 and the regulation of PLCB1 downstream signaling may indirectly regulate the function of the endothelial barrier and the adhesion of leukocytes to the endothelium. Also has a palmitoyltransferase activity toward ADRA1D, positively regulating its activity and expression and may thereby play a role in vascular contraction. May also palmitoylate eNOS and LCK. The protein is Palmitoyltransferase ZDHHC21 of Homo sapiens (Human).